Consider the following 352-residue polypeptide: GTPase Obg (352 aa).

Residues methionine 1–leucine 159 form the Obg domain. Residues serine 160 to aspartate 327 form the OBG-type G domain. GTP-binding positions include glycine 166 to serine 173, phenylalanine 191 to glutamate 195, aspartate 212 to glycine 215, asparagine 279 to aspartate 282, and serine 308 to aspartate 310. The Mg(2+) site is built by serine 173 and threonine 193.

It belongs to the TRAFAC class OBG-HflX-like GTPase superfamily. OBG GTPase family. As to quaternary structure, monomer. Mg(2+) is required as a cofactor.

It localises to the cytoplasm. Functionally, an essential GTPase which binds GTP, GDP and possibly (p)ppGpp with moderate affinity, with high nucleotide exchange rates and a fairly low GTP hydrolysis rate. Plays a role in control of the cell cycle, stress response, ribosome biogenesis and in those bacteria that undergo differentiation, in morphogenesis control. The polypeptide is GTPase Obg (Anaplasma phagocytophilum (strain HZ)).